Reading from the N-terminus, the 92-residue chain is Precursor of elicitor peptide 1 (92 aa).

The propeptide occupies 1–69; it reads MEKSDRRSEE…EKEEVVVTSR (69 aa). Positions 35–92 are disordered; that stretch reads HQDSPTTSSPGTSKQPKEEKEDVTMEKEEVVVTSRATKVKAKQRGKEKVSSGRPGQHN. Residues 37-48 show a composition bias toward polar residues; that stretch reads DSPTTSSPGTSK. Residues 49–64 show a composition bias toward basic and acidic residues; the sequence is QPKEEKEDVTMEKEEV.

This sequence belongs to the brassicaceae elicitor peptide family. In terms of assembly, interacts with its receptor PEPR1.

In terms of biological role, elicitor of plant defense. Induces the production of plant defensin (PDF1.2) and of H(2)O(2). Promotes resistance to the root fungal pathogen P.irregulare. Triggers the expression of several PROSCOOP genes (e.g. PROSCOOP2, PROSCOOP7, PROSCOOP8, PROSCOOP12 and PROSCOOP13). The chain is Precursor of elicitor peptide 1 from Arabidopsis thaliana (Mouse-ear cress).